The following is a 245-amino-acid chain: tRNA1(Val) (adenine(37)-N6)-methyltransferase (245 aa).

It belongs to the methyltransferase superfamily. tRNA (adenine-N(6)-)-methyltransferase family.

Its subcellular location is the cytoplasm. The enzyme catalyses adenosine(37) in tRNA1(Val) + S-adenosyl-L-methionine = N(6)-methyladenosine(37) in tRNA1(Val) + S-adenosyl-L-homocysteine + H(+). Its function is as follows. Specifically methylates the adenine in position 37 of tRNA(1)(Val) (anticodon cmo5UAC). The polypeptide is tRNA1(Val) (adenine(37)-N6)-methyltransferase (Salmonella paratyphi A (strain ATCC 9150 / SARB42)).